Reading from the N-terminus, the 587-residue chain is Lamin-B1 (587 aa).

Polar residues predominate over residues 1 to 11; the sequence is MATATPVQQRA. The tract at residues 1 to 29 is disordered; sequence MATATPVQQRAGSRASAPATPFSPTRLSR. A2 carries the post-translational modification N-acetylalanine. The tract at residues 2–34 is head; it reads ATATPVQQRAGSRASAPATPFSPTRLSRLQEKE. Phosphothreonine is present on residues T3 and T5. R14 carries the post-translational modification Omega-N-methylarginine. S16 is modified (phosphoserine). A Phosphothreonine modification is found at T20. Position 23 is a phosphoserine (S23). Position 25 is a phosphothreonine (T25). S28 is modified (phosphoserine). An IF rod domain is found at 32–388; the sequence is EKEELRELND…KLLEGEEERL (357 aa). The interval 35-69 is coil 1A; the sequence is ELRELNDRLAVYIDKVRSLETENSALQLQVTEREE. The interval 70–81 is linker 1; it reads VRGRELTGLKAL. Residues 82 to 215 are coil 1B; sequence YETELADARR…EFRKNMYEEE (134 aa). A Glycyl lysine isopeptide (Lys-Gly) (interchain with G-Cter in SUMO2) cross-link involves residue K102. K111 is modified (N6-acetyllysine). K123 participates in a covalent cross-link: Glycyl lysine isopeptide (Lys-Gly) (interchain with G-Cter in SUMO2). S126 is subject to Phosphoserine. A Glycyl lysine isopeptide (Lys-Gly) (interchain with G-Cter in SUMO2) cross-link involves residue K145. K157 carries the N6-acetyllysine; alternate modification. A Glycyl lysine isopeptide (Lys-Gly) (interchain with G-Cter in SUMO2); alternate cross-link involves residue K157. S158 is subject to Phosphoserine. K181 is covalently cross-linked (Glycyl lysine isopeptide (Lys-Gly) (interchain with G-Cter in SUMO2)). A phosphoserine mark is found at S200 and S232. The segment at 216–243 is linker 2; that stretch reads INETRRKHETRLVEVDSGRQIEYEYKLA. Glycyl lysine isopeptide (Lys-Gly) (interchain with G-Cter in SUMO2) cross-links involve residues K241 and K261. A coil 2 region spans residues 244-386; the sequence is QALHEMREQH…YRKLLEGEEE (143 aa). K271 carries the N6-acetyllysine; alternate modification. Residue K271 forms a Glycyl lysine isopeptide (Lys-Gly) (interchain with G-Cter in SUMO2); alternate linkage. S278 and S302 each carry phosphoserine. K312 is covalently cross-linked (Glycyl lysine isopeptide (Lys-Gly) (interchain with G-Cter in SUMO2)). K330 is subject to N6-acetyllysine; alternate. K330 participates in a covalent cross-link: Glycyl lysine isopeptide (Lys-Gly) (interchain with G-Cter in SUMO2); alternate. S375 and S393 each carry phosphoserine. The interval 387–587 is tail; the sequence is RLKLSPSPSS…RASNKSCAIM (201 aa). A compositionally biased stretch (low complexity) spans 390–409; it reads LSPSPSSRVTVSRASSSRSV. A disordered region spans residues 390–432; the sequence is LSPSPSSRVTVSRASSSRSVRTTRGKRKRVDVEESEASSSVSI. O-linked (GlcNAc) threonine glycosylation is present at T399. R413 bears the Omega-N-methylarginine mark. The Nuclear localization signal motif lies at 415–420; the sequence is KRKRVD. In terms of domain architecture, LTD spans 430–546; that stretch reads VSISHSASAT…EEVAQRSTVF (117 aa). K483 carries the N6-acetyllysine modification. K532 is covalently cross-linked (Glycyl lysine isopeptide (Lys-Gly) (interchain with G-Cter in SUMO2)). Phosphoserine is present on S534. A Glycyl lysine isopeptide (Lys-Gly) (interchain with G-Cter in SUMO2) cross-link involves residue K547. The tract at residues 550-587 is disordered; sequence IPEEEEEEEEEPIGVPLEEERFHQQGTPRASNKSCAIM. Residues 551-561 are compositionally biased toward acidic residues; it reads PEEEEEEEEEP. Polar residues predominate over residues 573 to 587; it reads QQGTPRASNKSCAIM. Residue T576 is modified to Phosphothreonine. Cysteine methyl ester is present on C584. A lipid anchor (S-farnesyl cysteine) is attached at C584. The propeptide at 585–587 is removed in mature form; that stretch reads AIM.

The protein belongs to the intermediate filament family. As to quaternary structure, homodimer. Lamin dimers then assemble into dimeric head-to-tail polymers. Ultimately, two head-to-tail polymers assemble laterally into a protofilament with a uniformly shaped rod of 3.5 nm in diameter. Interacts with SPAG4 and SEPT12. In terms of processing, B-type lamins undergo a series of modifications, such as farnesylation and phosphorylation. Increased phosphorylation of the lamins occurs before envelope disintegration and probably plays a role in regulating lamin associations. Post-translationally, phosphorylation plays a key role in lamin organization, subcellular localization and nuclear envelope disintegration. Phosphorylation by CDK1 at Ser-23 and Ser-393 at the onset of mitosis drives lamin disassembly and nuclear envelope breakdown.

It localises to the nucleus lamina. Its function is as follows. Lamins are intermediate filament proteins that assemble into a filamentous meshwork, and which constitute the major components of the nuclear lamina, a fibrous layer on the nucleoplasmic side of the inner nuclear membrane. Lamins provide a framework for the nuclear envelope, bridging the nuclear envelope and chromatin, thereby playing an important role in nuclear assembly, chromatin organization, nuclear membrane and telomere dynamics. The structural integrity of the lamina is strictly controlled by the cell cycle, as seen by the disintegration and formation of the nuclear envelope in prophase and telophase, respectively. This is Lamin-B1 (Lmnb1) from Rattus norvegicus (Rat).